An 808-amino-acid chain; its full sequence is Receptor like protein 27 (808 aa).

Positions 1–31 (MLFFIKVFMKTILSVLLLFFIFASSFTLVVG) are cleaved as a signal peptide. Residues 32 to 740 (LAGCRPDQIQ…DEDEEVLNWK (709 aa)) are Extracellular-facing. Asn56, Asn68, Asn90, Asn103, Asn108, Asn144, and Asn167 each carry an N-linked (GlcNAc...) asparagine glycan. 12 LRR repeats span residues 96–120 (LQHL…GFGN), 122–144 (NRLE…SFSN), 145–170 (LSQL…NLTK), 172–192 (SILV…LLTL), 193–218 (PFLS…STSS), 220–241 (LEFM…ISKL), 242–265 (INLK…LFSS), 266–291 (FKSL…SKIP), 293–314 (NLEN…LKNL), 315–338 (TKLE…FWNL), 340–363 (RLRR…VLVN), and 364–387 (SSVR…PLSI). N-linked (GlcNAc...) asparagine glycosylation occurs at Asn213. A glycan (N-linked (GlcNAc...) asparagine) is linked at Asn313. A glycan (N-linked (GlcNAc...) asparagine) is linked at Asn363. An LRR 13; degenerate repeat occupies 388 to 407 (NLLSAWNNSFTGNIPLETCN). Asn394, Asn407, and Asn420 each carry an N-linked (GlcNAc...) asparagine glycan. 10 LRR repeats span residues 408–434 (RSSL…DFQE), 436–456 (LIVV…IFSD), 457–481 (GALL…LLNC), 483–504 (MLRF…WLKA), 505–529 (LPDL…DRGP), 532–556 (FPKL…YFVN), 601–625 (LTSY…IGLL), 626–649 (KALI…LANV), 650–673 (TELE…LKTL), and 675–698 (FLAY…QITG). An N-linked (GlcNAc...) asparagine glycan is attached at Asn480. A glycan (N-linked (GlcNAc...) asparagine) is linked at Asn544. 2 N-linked (GlcNAc...) asparagine glycosylation sites follow: Asn632 and Asn648. A helical transmembrane segment spans residues 741 to 761 (AVVIGYWPGLLLGLIMAHVIA). The Cytoplasmic portion of the chain corresponds to 762–808 (SFKPKWLVKIVGPEKRKEDNPVRLFMTLDSRWDSFNNKKNVEQKSDM).

The protein belongs to the RLP family.

Its subcellular location is the cell membrane. This Arabidopsis thaliana (Mouse-ear cress) protein is Receptor like protein 27.